The following is a 222-amino-acid chain: Ribosomal RNA large subunit methyltransferase E (222 aa).

S-adenosyl-L-methionine is bound by residues glycine 64, tryptophan 66, aspartate 92, aspartate 108, and aspartate 133. Lysine 173 functions as the Proton acceptor in the catalytic mechanism.

It belongs to the class I-like SAM-binding methyltransferase superfamily. RNA methyltransferase RlmE family.

The protein resides in the cytoplasm. The catalysed reaction is uridine(2552) in 23S rRNA + S-adenosyl-L-methionine = 2'-O-methyluridine(2552) in 23S rRNA + S-adenosyl-L-homocysteine + H(+). In terms of biological role, specifically methylates the uridine in position 2552 of 23S rRNA at the 2'-O position of the ribose in the fully assembled 50S ribosomal subunit. This Variovorax paradoxus (strain S110) protein is Ribosomal RNA large subunit methyltransferase E.